A 235-amino-acid polypeptide reads, in one-letter code: NAD(P)H-hydrate epimerase (235 aa).

Residues 12–218 (AIVMDQLLMG…EFLKETNLTI (207 aa)) form the YjeF N-terminal domain. Residue 62 to 66 (NNGGD) coordinates (6S)-NADPHX. Residues N63 and D127 each coordinate K(+). (6S)-NADPHX contacts are provided by residues 131-137 (GYSFKGD) and D161. S164 lines the K(+) pocket.

The protein belongs to the NnrE/AIBP family. K(+) serves as cofactor.

It catalyses the reaction (6R)-NADHX = (6S)-NADHX. The enzyme catalyses (6R)-NADPHX = (6S)-NADPHX. Catalyzes the epimerization of the S- and R-forms of NAD(P)HX, a damaged form of NAD(P)H that is a result of enzymatic or heat-dependent hydration. This is a prerequisite for the S-specific NAD(P)H-hydrate dehydratase to allow the repair of both epimers of NAD(P)HX. This is NAD(P)H-hydrate epimerase from Dictyostelium discoideum (Social amoeba).